The primary structure comprises 173 residues: ATP-dependent protease subunit HslV (173 aa).

The active site involves Thr-2. Gly-157, Cys-160, and Thr-163 together coordinate Na(+).

Belongs to the peptidase T1B family. HslV subfamily. In terms of assembly, a double ring-shaped homohexamer of HslV is capped on each side by a ring-shaped HslU homohexamer. The assembly of the HslU/HslV complex is dependent on binding of ATP.

It is found in the cytoplasm. The enzyme catalyses ATP-dependent cleavage of peptide bonds with broad specificity.. Allosterically activated by HslU binding. Protease subunit of a proteasome-like degradation complex believed to be a general protein degrading machinery. The protein is ATP-dependent protease subunit HslV of Nitrosomonas eutropha (strain DSM 101675 / C91 / Nm57).